We begin with the raw amino-acid sequence, 229 residues long: Enolase-phosphatase E1 (229 aa).

It belongs to the HAD-like hydrolase superfamily. MasA/MtnC family. Monomer. Mg(2+) serves as cofactor.

It catalyses the reaction 5-methylsulfanyl-2,3-dioxopentyl phosphate + H2O = 1,2-dihydroxy-5-(methylsulfanyl)pent-1-en-3-one + phosphate. The protein operates within amino-acid biosynthesis; L-methionine biosynthesis via salvage pathway; L-methionine from S-methyl-5-thio-alpha-D-ribose 1-phosphate: step 3/6. It participates in amino-acid biosynthesis; L-methionine biosynthesis via salvage pathway; L-methionine from S-methyl-5-thio-alpha-D-ribose 1-phosphate: step 4/6. Its function is as follows. Bifunctional enzyme that catalyzes the enolization of 2,3-diketo-5-methylthiopentyl-1-phosphate (DK-MTP-1-P) into the intermediate 2-hydroxy-3-keto-5-methylthiopentenyl-1-phosphate (HK-MTPenyl-1-P), which is then dephosphorylated to form the acireductone 1,2-dihydroxy-3-keto-5-methylthiopentene (DHK-MTPene). This chain is Enolase-phosphatase E1, found in Yersinia pseudotuberculosis serotype IB (strain PB1/+).